Reading from the N-terminus, the 409-residue chain is Phospholipase ABHD3 (409 aa).

Residues 26–46 (GFFGSGVGLSLILGFSVAYAF) form a helical; Signal-anchor for type II membrane protein membrane-spanning segment. The 94-residue stretch at 140 to 233 (PTILLLPGLT…MLLLNYLGKI (94 aa)) folds into the AB hydrolase-1 domain. Catalysis depends on charge relay system residues serine 220, aspartate 346, and histidine 375.

This sequence belongs to the AB hydrolase superfamily. AB hydrolase 4 family.

It localises to the membrane. The enzyme catalyses a 1,2-diacyl-sn-glycero-3-phosphocholine + H2O = a 1-acyl-sn-glycero-3-phosphocholine + a fatty acid + H(+). It carries out the reaction a 1,2-diacyl-sn-glycero-3-phosphocholine + H2O = a 2-acyl-sn-glycero-3-phosphocholine + a fatty acid + H(+). The catalysed reaction is 1-tetradecanoyl-2-(9Z,12Z-octadecadienoyl)-sn-glycero-3-phosphocholine + H2O = 2-(9Z,12Z-octadecadienoyl)-sn-glycero-3-phosphocholine + tetradecanoate + H(+). It catalyses the reaction 1-tetradecanoyl-2-(9Z,12Z-octadecadienoyl)-sn-glycero-3-phosphocholine + H2O = 1-tetradecanoyl-sn-glycero-3-phosphocholine + (9Z,12Z)-octadecadienoate + H(+). The enzyme catalyses 1-tetradecanoyl-2-(5Z,8Z,11Z,14Z-eicosatetraenoyl)-sn-glycero-3-phosphocholine + H2O = 2-(5Z,8Z,11Z,14Z)-eicosatetraenoyl-sn-glycero-3-phosphocholine + tetradecanoate + H(+). It carries out the reaction 1-tetradecanoyl-2-(4Z,7Z,10Z,13Z,16Z,19Z-docosahexaenoyl)-sn-glycero-3-phosphocholine + H2O = 2-(4Z,7Z,10Z,13Z,16Z,19Z-docosahexaenoyl)-sn-glycero-3-phosphocholine + tetradecanoate + H(+). The catalysed reaction is 1,2-ditetradecanoyl-sn-glycero-3-phosphocholine + H2O = 2-tetradecanoyl-sn-glycero-3-phosphocholine + tetradecanoate + H(+). It catalyses the reaction 1-octadecanoyl-2-acetyl-sn-glycero-3-phosphocholine + H2O = 1-octadecanoyl-sn-glycero-3-phosphocholine + acetate + H(+). The enzyme catalyses 1,2-ditetradecanoyl-sn-glycero-3-phosphocholine + H2O = 1-tetradecanoyl-sn-glycero-3-phosphocholine + tetradecanoate + H(+). It carries out the reaction 1-octadecanoyl-2-pentanoyl-sn-glycero-3-phosphocholine + H2O = pentanoate + 1-octadecanoyl-sn-glycero-3-phosphocholine + H(+). The catalysed reaction is 1-octadecanoyl-2-hexanoyl-sn-glycero-3-phosphocholine + H2O = hexanoate + 1-octadecanoyl-sn-glycero-3-phosphocholine + H(+). It catalyses the reaction 1-octadecanoyl-2-octanoyl-sn-glycero-3-phosphocholine + H2O = 1-octadecanoyl-sn-glycero-3-phosphocholine + octanoate + H(+). The enzyme catalyses 1-octadecanoyl-2-nonanoyl-sn-glycero-3-phosphocholine + H2O = nonanoate + 1-octadecanoyl-sn-glycero-3-phosphocholine + H(+). It carries out the reaction 1-O-hexadecyl-2-nonadioyl-sn-glycero-3-phosphocholine + H2O = nonanedioate + 1-O-hexadecyl-sn-glycero-3-phosphocholine + H(+). The catalysed reaction is 1-hexadecanoyl-2-nonadioyl-sn-glycero-3-phosphocholine + H2O = nonanedioate + 1-hexadecanoyl-sn-glycero-3-phosphocholine + H(+). It catalyses the reaction 1-hexadecanoyl-2-(9-oxononanoyl)-sn-glycero-3-phosphocholine + H2O = 9-oxononanoate + 1-hexadecanoyl-sn-glycero-3-phosphocholine + H(+). The enzyme catalyses 1-hexadecanoyl-2-(5-oxopentanoyl)-sn-glycero-3-phosphocholine + H2O = 5-oxopentanoate + 1-hexadecanoyl-sn-glycero-3-phosphocholine + H(+). It carries out the reaction 1-hexadecanoyl-2-glutaroyl-sn-glycero-3-phosphocholine + H2O = glutarate + 1-hexadecanoyl-sn-glycero-3-phosphocholine + H(+). The catalysed reaction is 1-O-hexadecyl-2-acetyl-sn-glycero-3-phosphocholine + H2O = 1-O-hexadecyl-sn-glycero-3-phosphocholine + acetate + H(+). Phospholipase that may play a role in phospholipids remodeling. May selectively cleave myristate (C14)-containing phosphatidylcholines through its predominant phospholipase 1 activity, cleaving preferentially acyl groups in sn1 position. In parallel, may have a minor phospholipase 2 activity acting on acyl groups in position sn2. In addition to (C14)-containing phosphatidylcholines, may also act on other medium-chain-containing and oxidatively truncated phospholipids. The sequence is that of Phospholipase ABHD3 from Homo sapiens (Human).